The chain runs to 508 residues: Hydroxymethylglutaryl-CoA synthase, mitochondrial (508 aa).

A mitochondrion-targeting transit peptide spans 1–37 (MQRLLTPVRQVLRVKRAMQEASFMPPLLPPAAHQRFS). Lys-52 carries the N6-succinyllysine modification. The (3S)-3-hydroxy-3-methylglutaryl-CoA site is built by Glu-80 and Ala-81. Glu-132 (proton donor/acceptor) is an active-site residue. (3S)-3-hydroxy-3-methylglutaryl-CoA is bound by residues Cys-166, Asn-204, and Thr-208. The active-site Acyl-thioester intermediate is Cys-166. Lys-243 is modified (N6-acetyllysine). Lys-256 bears the N6-acetyllysine; alternate mark. Residue Lys-256 is modified to N6-succinyllysine; alternate. (3S)-3-hydroxy-3-methylglutaryl-CoA-binding residues include Ser-258 and His-301. The Proton donor/acceptor role is filled by His-301. Lys-306 is modified (N6-acetyllysine). Position 310 (Lys-310) interacts with (3S)-3-hydroxy-3-methylglutaryl-CoA. Residue Lys-310 is modified to N6-acetyllysine; alternate. Position 310 is an N6-succinyllysine; alternate (Lys-310). An N6-succinyllysine modification is found at Lys-333. An N6-acetyllysine; alternate mark is found at Lys-342, Lys-350, Lys-354, and Lys-358. N6-succinyllysine; alternate occurs at positions 342, 350, 354, and 358. Residues Asn-380 and Ser-414 each coordinate (3S)-3-hydroxy-3-methylglutaryl-CoA. Phosphoserine is present on Ser-433. Position 437 is an N6-acetyllysine (Lys-437). Phosphoserine occurs at positions 440 and 456. Lys-473 carries the post-translational modification N6-acetyllysine; alternate. Residue Lys-473 is modified to N6-succinyllysine; alternate.

It belongs to the thiolase-like superfamily. HMG-CoA synthase family. Homodimer. In terms of processing, succinylated. Desuccinylated by SIRT5. Succinylation, at least at Lys-310, inhibits the enzymatic activity.

Its subcellular location is the mitochondrion. It carries out the reaction acetoacetyl-CoA + acetyl-CoA + H2O = (3S)-3-hydroxy-3-methylglutaryl-CoA + CoA + H(+). It participates in metabolic intermediate biosynthesis; (R)-mevalonate biosynthesis; (R)-mevalonate from acetyl-CoA: step 2/3. Its function is as follows. Catalyzes the first irreversible step in ketogenesis, condensing acetyl-CoA to acetoacetyl-CoA to form HMG-CoA, which is converted by HMG-CoA reductase (HMGCR) into mevalonate. This Sus scrofa (Pig) protein is Hydroxymethylglutaryl-CoA synthase, mitochondrial (HMGCS2).